The following is a 501-amino-acid chain: Cytochrome P450 6j1 (501 aa).

C444 serves as a coordination point for heme.

Belongs to the cytochrome P450 family. Heme is required as a cofactor.

Its subcellular location is the endoplasmic reticulum membrane. It is found in the microsome membrane. The chain is Cytochrome P450 6j1 (CYP6J1) from Blattella germanica (German cockroach).